A 375-amino-acid polypeptide reads, in one-letter code: Chaperone protein DnaJ (375 aa).

The region spanning 5–69 (DYYEVLGVGK…QKRAHYDQFG (65 aa)) is the J domain. Residues 132 to 214 (GKETTIEIPR…CGGTGKVKKR (83 aa)) form a CR-type zinc finger. Residues Cys145, Cys148, Cys162, Cys165, Cys188, Cys191, Cys202, and Cys205 each contribute to the Zn(2+) site. CXXCXGXG motif repeat units follow at residues 145–152 (CETCSGSG), 162–169 (CSHCGGSG), 188–195 (CHYCNGTG), and 202–209 (CSTCGGTG).

It belongs to the DnaJ family. As to quaternary structure, homodimer. The cofactor is Zn(2+).

It is found in the cytoplasm. Its function is as follows. Participates actively in the response to hyperosmotic and heat shock by preventing the aggregation of stress-denatured proteins and by disaggregating proteins, also in an autonomous, DnaK-independent fashion. Unfolded proteins bind initially to DnaJ; upon interaction with the DnaJ-bound protein, DnaK hydrolyzes its bound ATP, resulting in the formation of a stable complex. GrpE releases ADP from DnaK; ATP binding to DnaK triggers the release of the substrate protein, thus completing the reaction cycle. Several rounds of ATP-dependent interactions between DnaJ, DnaK and GrpE are required for fully efficient folding. Also involved, together with DnaK and GrpE, in the DNA replication of plasmids through activation of initiation proteins. This Bacillus licheniformis (strain ATCC 14580 / DSM 13 / JCM 2505 / CCUG 7422 / NBRC 12200 / NCIMB 9375 / NCTC 10341 / NRRL NRS-1264 / Gibson 46) protein is Chaperone protein DnaJ.